The chain runs to 85 residues: Putative membrane protein insertion efficiency factor (85 aa).

This sequence belongs to the UPF0161 family.

The protein localises to the cell inner membrane. Could be involved in insertion of integral membrane proteins into the membrane. The protein is Putative membrane protein insertion efficiency factor of Tolumonas auensis (strain DSM 9187 / NBRC 110442 / TA 4).